The following is a 218-amino-acid chain: NAD(P)H-quinone oxidoreductase subunit I (218 aa).

2 consecutive 4Fe-4S ferredoxin-type domains span residues 55 to 84 (GRIH…VDWV) and 95 to 124 (RNYS…MTEE). The [4Fe-4S] cluster site is built by C64, C67, C70, C74, C104, C107, C110, and C114. The segment at 169 to 218 (MDPHDVPANQPRAGQLPAEALKSLSLQQESVQGDEGESLQDASDQDQPSG) is disordered. Polar residues predominate over residues 208-218 (QDASDQDQPSG).

This sequence belongs to the complex I 23 kDa subunit family. NDH-1 is composed of at least 11 different subunits. [4Fe-4S] cluster is required as a cofactor.

The protein localises to the cellular thylakoid membrane. It catalyses the reaction a plastoquinone + NADH + (n+1) H(+)(in) = a plastoquinol + NAD(+) + n H(+)(out). It carries out the reaction a plastoquinone + NADPH + (n+1) H(+)(in) = a plastoquinol + NADP(+) + n H(+)(out). Its function is as follows. NDH-1 shuttles electrons from an unknown electron donor, via FMN and iron-sulfur (Fe-S) centers, to quinones in the respiratory and/or the photosynthetic chain. The immediate electron acceptor for the enzyme in this species is believed to be plastoquinone. Couples the redox reaction to proton translocation, and thus conserves the redox energy in a proton gradient. The sequence is that of NAD(P)H-quinone oxidoreductase subunit I from Prochlorococcus marinus (strain MIT 9313).